A 122-amino-acid polypeptide reads, in one-letter code: Putative TLX1 neighbor protein (122 aa).

The segment at 21–122 is disordered; that stretch reads SLLSQEAMGP…LGGGRGQRGQ (102 aa). Over residues 113 to 122 the composition is skewed to gly residues; that stretch reads LGGGRGQRGQ.

This Homo sapiens (Human) protein is Putative TLX1 neighbor protein (TLX1NB).